The sequence spans 277 residues: Probable endonuclease 4 (277 aa).

Zn(2+) is bound by residues histidine 67, histidine 107, glutamate 141, aspartate 173, histidine 176, histidine 207, aspartate 220, histidine 222, and glutamate 252.

Belongs to the AP endonuclease 2 family. Zn(2+) is required as a cofactor.

It catalyses the reaction Endonucleolytic cleavage to 5'-phosphooligonucleotide end-products.. Endonuclease IV plays a role in DNA repair. It cleaves phosphodiester bonds at apurinic or apyrimidinic (AP) sites, generating a 3'-hydroxyl group and a 5'-terminal sugar phosphate. The protein is Probable endonuclease 4 of Finegoldia magna (strain ATCC 29328 / DSM 20472 / WAL 2508) (Peptostreptococcus magnus).